Reading from the N-terminus, the 242-residue chain is Caffeoyl-CoA O-methyltransferase 3 (242 aa).

Residue Lys16 participates in substrate binding. Residues Thr58, Glu80, 82 to 83, Ser88, Asp106, and Ala135 contribute to the S-adenosyl-L-methionine site; that span reads GV. Asp158 lines the substrate pocket. Asp158 provides a ligand contact to a divalent metal cation. Residue Asp160 coordinates S-adenosyl-L-methionine. Asp184 and Asn185 together coordinate a divalent metal cation. Position 189 (Asn189) interacts with substrate.

Belongs to the class I-like SAM-binding methyltransferase superfamily. Cation-dependent O-methyltransferase family. CCoAMT subfamily. Mg(2+) is required as a cofactor. In terms of tissue distribution, mostly expressed in the bottom and middle parts of the stems.

It carries out the reaction (E)-caffeoyl-CoA + S-adenosyl-L-methionine = (E)-feruloyl-CoA + S-adenosyl-L-homocysteine + H(+). It functions in the pathway aromatic compound metabolism; phenylpropanoid biosynthesis. Functionally, methylates caffeoyl-CoA to feruloyl-CoA and 5-hydroxyferuloyl-CoA to sinapoyl-CoA. Plays a role in the synthesis of feruloylated polysaccharides. Involved in the reinforcement of the plant cell wall. Also involved in the responding to wounding or pathogen challenge by the increased formation of cell wall-bound ferulic acid polymers. Also methylates free caffeic and 5-hydroxyferulic acids. The protein is Caffeoyl-CoA O-methyltransferase 3 (CCOAOMT3) of Nicotiana tabacum (Common tobacco).